Here is an 863-residue protein sequence, read N- to C-terminus: Bifunctional uridylyltransferase/uridylyl-removing enzyme (863 aa).

The tract at residues 1–328 (MLFSPTLSSL…SSNQDTVIDQ (328 aa)) is uridylyltransferase. The segment at 329-687 (LDDDFQLINQ…ISNRFSLGGT (359 aa)) is uridylyl-removing. The region spanning 446–568 (VDEHTLRVML…MQNQVRLDYL (123 aa)) is the HD domain. ACT domains lie at 688 to 764 (EVFI…KLPA) and 794 to 863 (EMEL…QQIR).

Belongs to the GlnD family. It depends on Mg(2+) as a cofactor.

It carries out the reaction [protein-PII]-L-tyrosine + UTP = [protein-PII]-uridylyl-L-tyrosine + diphosphate. It catalyses the reaction [protein-PII]-uridylyl-L-tyrosine + H2O = [protein-PII]-L-tyrosine + UMP + H(+). Its activity is regulated as follows. Uridylyltransferase (UTase) activity is inhibited by glutamine, while glutamine activates uridylyl-removing (UR) activity. Functionally, modifies, by uridylylation and deuridylylation, the PII regulatory proteins (GlnB and homologs), in response to the nitrogen status of the cell that GlnD senses through the glutamine level. Under low glutamine levels, catalyzes the conversion of the PII proteins and UTP to PII-UMP and PPi, while under higher glutamine levels, GlnD hydrolyzes PII-UMP to PII and UMP (deuridylylation). Thus, controls uridylylation state and activity of the PII proteins, and plays an important role in the regulation of nitrogen assimilation and metabolism. In Haemophilus influenzae (strain ATCC 51907 / DSM 11121 / KW20 / Rd), this protein is Bifunctional uridylyltransferase/uridylyl-removing enzyme.